A 1701-amino-acid chain; its full sequence is Merozoite surface protein 1 (1701 aa).

Positions 1 to 19 are cleaved as a signal peptide; it reads MKIIFFLCSFLFFIINTQC. Gly residues predominate over residues 89–100; that stretch reads GSGGSVASGGSG. The segment at 89–118 is disordered; the sequence is GSGGSVASGGSGNSRRTNPSDNSSDSNTKT. Over residues 101 to 116 the composition is skewed to low complexity; the sequence is NSRRTNPSDNSSDSNT. N-linked (GlcNAc...) asparagine glycans are attached at residues Asn-110 and Asn-239. The segment at 322–344 is disordered; sequence DAENPTTGSKPNPLPENKKKEVE. N-linked (GlcNAc...) asparagine glycans are attached at residues Asn-470, Asn-536, and Asn-607. A disordered region spans residues 704 to 739; sequence SETTEDGGHSTHTLSQSGETEVTEETEVTEETVGHT. Residues 724–733 are compositionally biased toward acidic residues; it reads EVTEETEVTE. N-linked (GlcNAc...) asparagine glycans are attached at residues Asn-802, Asn-899, Asn-919, Asn-965, Asn-991, Asn-1089, and Asn-1196. Residues 889–927 are compositionally biased toward low complexity; sequence TGTSSTSSPGNTTVNTAQSATHSNSQNQQSNASSTNTQN. Positions 889–936 are disordered; sequence TGTSSTSSPGNTTVNTAQSATHSNSQNQQSNASSTNTQNGVAVSSGPA. 2 disordered regions span residues 1231–1259 and 1451–1472; these read PPQP…TQIP and KEKF…DEQK. Over residues 1245–1259 the composition is skewed to polar residues; that stretch reads VSGSSGSTKEETQIP. Over residues 1456 to 1465 the composition is skewed to pro residues; it reads SSPPTTPPSP. Asn-1588 is a glycosylation site (N-linked (GlcNAc...) asparagine). EGF-like domains follow at residues 1592–1632 and 1633–1680; these read HQCV…VENP and NPTC…IFCS. Intrachain disulfides connect Cys-1594-Cys-1605, Cys-1599-Cys-1615, Cys-1617-Cys-1628, Cys-1636-Cys-1649, Cys-1643-Cys-1663, and Cys-1665-Cys-1679. A lipid anchor (GPI-anchor amidated serine) is attached at Ser-1680. Residues 1681 to 1701 constitute a propeptide, removed in mature form; the sequence is SSNFLGISFLLILMLILYSFI.

Forms a complex composed of subunits p83, p30, p38, and p42 which remain non-covalently associated; the complex is formed at the merozoite surface prior to egress from host erythrocytes. Forms a complex composed of processed MSP1 subunits, MSP6 subunit p36 and MSP7; the complex is formed at the merozoite surface prior to egress from host erythrocytes. Within the complex, interacts (via subunit p38) with MSP6 subunit p36 and (via subunits p83, p30 and p38) with MSP7 (via subunit p22). Forms a complex composed of MSP1, MSP6, DBLMSP1 and DBLMSP2. Within the complex, interacts (via subunit p38) with DBLMSP1 and DBLMSP2. Forms a complex composed of MSP1, and rhoptry proteins RhopH3, RAP1 and CLAG9/RhopH3. Within the complex, interacts (via subunits p42 and p19) with RhopH3 (via C-terminus). Forms a complex composed of MSP1, MSP6, MSP7, MSP9 and MSP3; within the complex, MSP6 and MSP9 mediate the binding to the host erythrocyte. Interacts (via subunits p19 and p42) with MSP9; the interaction is direct; MSP1 subunits p19 or p42, and MSP9 form a co-ligand complex that interacts with host SLC4A1/Band 3 protein. May interact with PFD6. Interacts with host spectrin. As to quaternary structure, interacts with host glycophorin GYPA in a sialic acid-independent manner. In terms of assembly, interacts with host proinflammatory cytokine S100P; the interaction blocks S100P inflammatory and chemotactic activities. Interacts with host SLC4A1/Band 3 (via 5ABC region) on the host erythrocyte surface in a sialic acid-independent manner. In terms of processing, the p190 precursor is cleaved by SUB1 prior to merozoite egress into 4 subunits p83, p30, p38, and p42 which remain non-covalently associated. SUB1-mediated proteolytic cleavage occurs in an orderly manner; the first cleavage occurs at the p30/p38 site, followed by cleavage at the p83/p30 site, in the 3D7 strain a second cleavage occurs at the N-terminus of p83, the last cleavage occurs at the p38/p42 site. The order of cleavage is essential for parasite viability. SUB1-mediated processing is essential for merozoite egress. In a second processing step during erythrocyte invasion, p42 is cleaved by SUB2 into p33 and p19; the latter remains attached to the merozoite surface via its GPI-anchor and is endocytosed during the subsequent ring stage.

It is found in the cell membrane. The protein resides in the secreted. Its subcellular location is the vacuole membrane. Its function is as follows. During the asexual blood stage, involved in merozoite egress from host erythrocytes possibly via its interaction with the host cytoskeleton protein spectrin resulting in the destabilization of the host cytoskeleton and thus leading to erythrocyte cell membrane rupture. Involved in the binding to host erythrocytes and is required for host erythrocyte invasion. By binding to host proinflammatory cytokine S100P may interfere with host immune responses. In terms of biological role, involved in merozoite invasion of host erythrocytes. May play a role in the biogenesis and/or function of the food vacuole during the intraerythrocytic development. This chain is Merozoite surface protein 1, found in Plasmodium falciparum (isolate FC27 / Papua New Guinea).